Reading from the N-terminus, the 364-residue chain is 4-hydroxy-3-methylbut-2-en-1-yl diphosphate synthase (flavodoxin) (364 aa).

4 residues coordinate [4Fe-4S] cluster: Cys268, Cys271, Cys303, and Glu310.

It belongs to the IspG family. The cofactor is [4Fe-4S] cluster.

It catalyses the reaction (2E)-4-hydroxy-3-methylbut-2-enyl diphosphate + oxidized [flavodoxin] + H2O + 2 H(+) = 2-C-methyl-D-erythritol 2,4-cyclic diphosphate + reduced [flavodoxin]. The protein operates within isoprenoid biosynthesis; isopentenyl diphosphate biosynthesis via DXP pathway; isopentenyl diphosphate from 1-deoxy-D-xylulose 5-phosphate: step 5/6. In terms of biological role, converts 2C-methyl-D-erythritol 2,4-cyclodiphosphate (ME-2,4cPP) into 1-hydroxy-2-methyl-2-(E)-butenyl 4-diphosphate. This is 4-hydroxy-3-methylbut-2-en-1-yl diphosphate synthase (flavodoxin) from Desulfotalea psychrophila (strain LSv54 / DSM 12343).